A 350-amino-acid polypeptide reads, in one-letter code: Probable peptidyl-alpha-hydroxyglycine alpha-amidating lyase pgal-1 (350 aa).

The N-terminal stretch at Met1 to Ala19 is a signal peptide. One copy of the NHL 1 repeat lies at Asp46–Asp90. An N-linked (GlcNAc...) asparagine glycan is attached at Asn103. NHL repeat units lie at residues Lys113–Lys154, Leu162–Lys206, and Gln212–Gly256. Cystine bridges form between Cys176/Cys196 and Cys241/Cys252.

The protein belongs to the peptidyl-alpha-hydroxyglycine alpha-amidating lyase family. Zn(2+) is required as a cofactor.

The protein localises to the secreted. It catalyses the reaction a [peptide]-C-terminal (2S)-2-hydroxyglycine = a [peptide]-C-terminal amide + glyoxylate. Probable lyase that catalyzes an essential reaction in C-terminal alpha-amidation of peptides. Mediates the dismutation of the unstable peptidyl(2-hydroxyglycine) intermediate to glyoxylate and the corresponding desglycine peptide amide. C-terminal amidation of peptides such as neuropeptides is essential for full biological activity. The protein is Probable peptidyl-alpha-hydroxyglycine alpha-amidating lyase pgal-1 of Caenorhabditis elegans.